We begin with the raw amino-acid sequence, 128 residues long: Aspartate 1-decarboxylase (128 aa).

The Schiff-base intermediate with substrate; via pyruvic acid role is filled by S25. Position 25 is a pyruvic acid (Ser) (S25). A substrate-binding site is contributed by T57. Y58 (proton donor) is an active-site residue. 73-75 (GSA) serves as a coordination point for substrate.

This sequence belongs to the PanD family. As to quaternary structure, heterooctamer of four alpha and four beta subunits. Requires pyruvate as cofactor. Post-translationally, is synthesized initially as an inactive proenzyme, which is activated by self-cleavage at a specific serine bond to produce a beta-subunit with a hydroxyl group at its C-terminus and an alpha-subunit with a pyruvoyl group at its N-terminus.

It is found in the cytoplasm. It carries out the reaction L-aspartate + H(+) = beta-alanine + CO2. It participates in cofactor biosynthesis; (R)-pantothenate biosynthesis; beta-alanine from L-aspartate: step 1/1. Functionally, catalyzes the pyruvoyl-dependent decarboxylation of aspartate to produce beta-alanine. This is Aspartate 1-decarboxylase from Burkholderia ambifaria (strain ATCC BAA-244 / DSM 16087 / CCUG 44356 / LMG 19182 / AMMD) (Burkholderia cepacia (strain AMMD)).